The sequence spans 201 residues: FMN-dependent NADH:quinone oxidoreductase (201 aa).

FMN is bound by residues 92 to 95 (MWNL) and 136 to 139 (STGG).

The protein belongs to the azoreductase type 1 family. In terms of assembly, homodimer. FMN is required as a cofactor.

It catalyses the reaction 2 a quinone + NADH + H(+) = 2 a 1,4-benzosemiquinone + NAD(+). The enzyme catalyses N,N-dimethyl-1,4-phenylenediamine + anthranilate + 2 NAD(+) = 2-(4-dimethylaminophenyl)diazenylbenzoate + 2 NADH + 2 H(+). Its function is as follows. Quinone reductase that provides resistance to thiol-specific stress caused by electrophilic quinones. In terms of biological role, also exhibits azoreductase activity. Catalyzes the reductive cleavage of the azo bond in aromatic azo compounds to the corresponding amines. The polypeptide is FMN-dependent NADH:quinone oxidoreductase (Coprothermobacter proteolyticus (strain ATCC 35245 / DSM 5265 / OCM 4 / BT)).